A 289-amino-acid chain; its full sequence is 33 kDa chaperonin (289 aa).

2 disulfide bridges follow: Cys-230–Cys-232 and Cys-263–Cys-266.

Belongs to the HSP33 family. Post-translationally, under oxidizing conditions two disulfide bonds are formed involving the reactive cysteines. Under reducing conditions zinc is bound to the reactive cysteines and the protein is inactive.

The protein localises to the cytoplasm. Its function is as follows. Redox regulated molecular chaperone. Protects both thermally unfolding and oxidatively damaged proteins from irreversible aggregation. Plays an important role in the bacterial defense system toward oxidative stress. This is 33 kDa chaperonin from Shigella flexneri serotype 5b (strain 8401).